The following is a 95-amino-acid chain: Aspartyl/glutamyl-tRNA(Asn/Gln) amidotransferase subunit C (95 aa).

The protein belongs to the GatC family. Heterotrimer of A, B and C subunits.

It catalyses the reaction L-glutamyl-tRNA(Gln) + L-glutamine + ATP + H2O = L-glutaminyl-tRNA(Gln) + L-glutamate + ADP + phosphate + H(+). It carries out the reaction L-aspartyl-tRNA(Asn) + L-glutamine + ATP + H2O = L-asparaginyl-tRNA(Asn) + L-glutamate + ADP + phosphate + 2 H(+). Its function is as follows. Allows the formation of correctly charged Asn-tRNA(Asn) or Gln-tRNA(Gln) through the transamidation of misacylated Asp-tRNA(Asn) or Glu-tRNA(Gln) in organisms which lack either or both of asparaginyl-tRNA or glutaminyl-tRNA synthetases. The reaction takes place in the presence of glutamine and ATP through an activated phospho-Asp-tRNA(Asn) or phospho-Glu-tRNA(Gln). The protein is Aspartyl/glutamyl-tRNA(Asn/Gln) amidotransferase subunit C of Brucella anthropi (strain ATCC 49188 / DSM 6882 / CCUG 24695 / JCM 21032 / LMG 3331 / NBRC 15819 / NCTC 12168 / Alc 37) (Ochrobactrum anthropi).